Consider the following 982-residue polypeptide: Bifunctional glutamine synthetase adenylyltransferase/adenylyl-removing enzyme (982 aa).

Positions 1 to 460 (MSLPSLANLP…HFRQVIADPD (460 aa)) are adenylyl removase. The segment at 473 to 982 (GAEWIPLWEE…IRIWRELRLG (510 aa)) is adenylyl transferase.

Belongs to the GlnE family. Mg(2+) serves as cofactor.

The enzyme catalyses [glutamine synthetase]-O(4)-(5'-adenylyl)-L-tyrosine + phosphate = [glutamine synthetase]-L-tyrosine + ADP. The catalysed reaction is [glutamine synthetase]-L-tyrosine + ATP = [glutamine synthetase]-O(4)-(5'-adenylyl)-L-tyrosine + diphosphate. Involved in the regulation of glutamine synthetase GlnA, a key enzyme in the process to assimilate ammonia. When cellular nitrogen levels are high, the C-terminal adenylyl transferase (AT) inactivates GlnA by covalent transfer of an adenylyl group from ATP to specific tyrosine residue of GlnA, thus reducing its activity. Conversely, when nitrogen levels are low, the N-terminal adenylyl removase (AR) activates GlnA by removing the adenylyl group by phosphorolysis, increasing its activity. The regulatory region of GlnE binds the signal transduction protein PII (GlnB) which indicates the nitrogen status of the cell. The chain is Bifunctional glutamine synthetase adenylyltransferase/adenylyl-removing enzyme from Pseudomonas aeruginosa (strain ATCC 15692 / DSM 22644 / CIP 104116 / JCM 14847 / LMG 12228 / 1C / PRS 101 / PAO1).